Consider the following 108-residue polypeptide: C-C motif chemokine 19 (108 aa).

The signal sequence occupies residues 1 to 25 (MAPRVTPLLAFSLLVLWTFPAPTLG). 2 disulfides stabilise this stretch: Cys33–Cys59 and Cys34–Cys75. A glycan (N-linked (GlcNAc...) asparagine) is linked at Asn100.

The protein belongs to the intercrine beta (chemokine CC) family. In terms of assembly, interacts with TNFAIP6 (via Link domain). As to expression, highly expressed by dendritic cells in mesenteric and peripheral lymph nodes. Significant expression in spleen (T cell zone or periarteriolar lymphatic sheath) and Peyer patches. Low expression in thymus.

The protein resides in the secreted. Functionally, strongly chemotactic for naive (L-selectinhi) CD4 T-cells and for CD8 T-cells and weakly attractive for resting B-cells and memory (L-selectinlo) CD4 T-cells. May play a role in promoting encounters between recirculating T-cells and dendritic cells and in the migration of activated B-cells into the T-zone of secondary lymphoid tissues. Binds to chemokine receptor CCR7. Binds to atypical chemokine receptor ACKR4 and mediates the recruitment of beta-arrestin (ARRB1/2) to ACKR4. The chain is C-C motif chemokine 19 (Ccl19) from Mus musculus (Mouse).